A 415-amino-acid polypeptide reads, in one-letter code: Styrene monooxygenase StyA (415 aa).

The protein belongs to the StyA family. As to quaternary structure, homodimer. A direct interaction with the monooxygenase reductase component StyB seems not to be necessary for the enzymatic activity.

The enzyme catalyses styrene + FADH2 + O2 = (S)-styrene oxide + FAD + H2O + H(+). The protein operates within aromatic compound metabolism. Functionally, styrene monooxygenase which catalyzes the first step in the aerobic styrene degradation pathway by enantioselective epoxidation of the vinyl side chain. In a two-component system, a reductase utilizes NADH to reduce FAD, which is then transferred to the oxygenase; the electron transfer is proposed to occur via a diffusing flavin. This is Styrene monooxygenase StyA (styA) from Pseudomonas sp.